The primary structure comprises 284 residues: Probable 3-mercaptopyruvate sulfurtransferase (284 aa).

2 Rhodanese domains span residues 17–138 (SEPD…ALTN) and 168–281 (GQPG…RPVA). Arg182 contributes to the substrate binding site. Cys241 acts as the Cysteine persulfide intermediate in catalysis. Residues 241–247 (CGSGVTA) form a substrate specificity region.

Its subcellular location is the cytoplasm. It catalyses the reaction 2-oxo-3-sulfanylpropanoate + [thioredoxin]-dithiol = [thioredoxin]-disulfide + hydrogen sulfide + pyruvate + H(+). Its function is as follows. Catalyzes the transfer of sulfur from 3-mercaptopyruvate to a thiol-containing acceptor to form an intramolecular disulfide releasing hydrogen sulfide and pyruvate. In Pseudomonas aeruginosa (strain ATCC 15692 / DSM 22644 / CIP 104116 / JCM 14847 / LMG 12228 / 1C / PRS 101 / PAO1), this protein is Probable 3-mercaptopyruvate sulfurtransferase (sseA).